We begin with the raw amino-acid sequence, 407 residues long: Accessory Sec system protein translocase subunit SecY2 (407 aa).

A run of 10 helical transmembrane segments spans residues 13-33, 65-85, 104-124, 133-153, 158-178, 192-212, 248-268, 287-307, 345-365, and 370-390; these read FLWT…TLPF, FFSI…MFTV, MLLT…NLPL, GTIV…LIWL, SSMG…SYIP, PLIL…AVLV, IMYA…LLFF, IPWF…FAFI, FAFV…LLIF, and YMRL…VFSI.

This sequence belongs to the SecY/SEC61-alpha family. SecY2 subfamily. May form heterotrimers with SecE and SecG subunits (Potential). Component of the accessory SecA2/SecY2 protein translocase complex required to export cell wall protein GspB.

The protein localises to the cell membrane. Functionally, the central subunit of a protein translocation channel (Potential). Part of the accessory SecA2/SecY2 system specifically required to export GspB, a serine-rich repeat cell wall protein encoded upstream in the same operon. This Streptococcus gordonii protein is Accessory Sec system protein translocase subunit SecY2.